A 154-amino-acid chain; its full sequence is 6,7-dimethyl-8-ribityllumazine synthase (154 aa).

Residues phenylalanine 21, 55 to 57, and 79 to 81 each bind 5-amino-6-(D-ribitylamino)uracil; these read AFE and CVI. Position 84 to 85 (84 to 85) interacts with (2S)-2-hydroxy-3-oxobutyl phosphate; it reads AT. The Proton donor role is filled by histidine 87. Phenylalanine 112 provides a ligand contact to 5-amino-6-(D-ribitylamino)uracil. Arginine 126 is a binding site for (2S)-2-hydroxy-3-oxobutyl phosphate.

The protein belongs to the DMRL synthase family. Forms an icosahedral capsid composed of 60 subunits, arranged as a dodecamer of pentamers.

The enzyme catalyses (2S)-2-hydroxy-3-oxobutyl phosphate + 5-amino-6-(D-ribitylamino)uracil = 6,7-dimethyl-8-(1-D-ribityl)lumazine + phosphate + 2 H2O + H(+). Its pathway is cofactor biosynthesis; riboflavin biosynthesis; riboflavin from 2-hydroxy-3-oxobutyl phosphate and 5-amino-6-(D-ribitylamino)uracil: step 1/2. Functionally, catalyzes the formation of 6,7-dimethyl-8-ribityllumazine by condensation of 5-amino-6-(D-ribitylamino)uracil with 3,4-dihydroxy-2-butanone 4-phosphate. This is the penultimate step in the biosynthesis of riboflavin. The chain is 6,7-dimethyl-8-ribityllumazine synthase from Staphylococcus aureus (strain MRSA252).